A 182-amino-acid chain; its full sequence is Large ribosomal subunit protein uL10 (182 aa).

The protein belongs to the universal ribosomal protein uL10 family. In terms of assembly, part of the ribosomal stalk of the 50S ribosomal subunit. The N-terminus interacts with L11 and the large rRNA to form the base of the stalk. The C-terminus forms an elongated spine to which L12 dimers bind in a sequential fashion forming a multimeric L10(L12)X complex.

Its function is as follows. Forms part of the ribosomal stalk, playing a central role in the interaction of the ribosome with GTP-bound translation factors. This Herminiimonas arsenicoxydans protein is Large ribosomal subunit protein uL10.